A 1243-amino-acid chain; its full sequence is MLIKEYHILLPMSLDEYQVAQLYMIQKKSREESSGEGSGVEILANRPYTDGPGGNGQYTHKVYHVGSHIPGWFRALLPKAALQVEEESWNAYPYTRTRYTCPFVEKFSIEIETYYLPDGGQQPNVFNLSGAERRQRIVDTIDIVRDAVAPGEYKAEEDPRLYRSAKTGRGPLADDWARTAAQTGPLMCAYKLCKVEFRYWGMQAKIEQFIHDVGLRRVMLRAHRQAWCWQDEWIELSMADIRALEEETARMLAQRMAKCNTGSEGPEAQTPGKSSTEARPGTSTAGTPDGPEAPPGPDASPDASFGKQWSSSSRSSYSSQHGGGVSPQSLSEWRMQNIARDSENSSEEEFFDAHEGFSDSDEVFPKEMTKWNSNDFIDAFASPTEVEGVPDPTVMATKGIEDGARAPRDSEGLDGAGDLVVEACSVHALFLILHSGSILDSGPGDTNSKQADVQTLSTAFEAVTRVHFPEALGHVALRLVPCPPICAAAYALVSNLSPYSHDGDSLSRSQDHIPLAALPLLATSSSRYQGAVATVIARTNQAYAAFLRSSEGTGFCGQVVLIGDGVGGILGFDALCHSASAGPGSRGSSRRGSMNNEMLSPEVGPVRDPLADGVEVLGRASPEPSALPAQRTFSDMANPDPDGSQNSLQVASTATSSGEPRRASTASCPPASSEAPDGPTNAARLDFKVSGFFLFGSPLGLVLALRKTVMPALEVAQLRPACEQIYNLFHAADPCASRLEPLLAPKFQAIAPLAVPRYQKFPLGDGSSLLLADTLQTHSSLFLEELEMMVPSTPTSASGAFWKGSELGNEPASQTAAPSTTSEVVKILDRWWGNKRIDYSLYCPEALTAFPTVTLPHLFHASYWESADVVAFILRQVIEKERPQLTECEEPSIYSPAFPREKWQRKRTQVKIRNVTSNHRASDTVVCEGRPQVLNGRFMYGPLDVVTLTGEKVDVYVMTQPLSGKWIHFGTEVTNSSGRLTFPVPSERALGIGVYPVRMVVRGDHTYAECCLTVVSRGTEAVVFSIDGSFTASVSIMGSDPKVRAGAVDVVRHWQDSGYLIVYVTGRPDMQKHRVVAWLSQHNFPHGVVSFCDGLTHDPLRQKAMFLQSLVQEVELNIVAGYGSPKDVAVYAALGLSPSQTYIVGRAVRKLQAQCQFLSDGYVAHLGQLEAGSHSHAPSGPPRAALAKSSYAVAAPVDFLRKQSQLLRSRGPSQVDREGPGTPPTTLARGKTRSISLKLDSEE.

3 positions are modified to phosphothreonine: T59, T282, and T287. Positions 259-330 are disordered; it reads CNTGSEGPEA…HGGGVSPQSL (72 aa). Polar residues predominate over residues 271-283; the sequence is PGKSSTEARPGTS. Low complexity predominate over residues 299–319; that stretch reads ASPDASFGKQWSSSSRSSYSS. Residues S300, S304, S319, S326, S329, S342, S345, S346, and S373 each carry the phosphoserine modification. S382 is subject to Phosphoserine; by CDK1. A compositionally biased stretch (low complexity) spans 581 to 593; the sequence is AGPGSRGSSRRGS. Positions 581-679 are disordered; sequence AGPGSRGSSR…PASSEAPDGP (99 aa). Residues S593, S600, and S621 each carry the phosphoserine modification. The span at 643-658 shows a compositional bias: polar residues; the sequence is GSQNSLQVASTATSSG. In terms of domain architecture, DDHD spans 684 to 878; the sequence is RLDFKVSGFF…VVAFILRQVI (195 aa). S895 bears the Phosphoserine mark. A disordered region spans residues 1206–1243; it reads LLRSRGPSQVDREGPGTPPTTLARGKTRSISLKLDSEE. Residues R1210 and R1217 each carry the omega-N-methylarginine modification. S1236 bears the Phosphoserine mark.

The protein belongs to the PtdIns transfer protein family. PI transfer class IIA subfamily. In terms of assembly, interacts with PTK2B via its C-terminus. Interacts with RHOA. Has higher affinity for the inactive, GDP-bound form of RHOA. The CDK1-phosphorylated form interacts with PLK1. Interacts with VAPB and PIK4CA. In terms of processing, phosphorylated on multiple sites by CDK1 at the onset of mitosis. Phosphorylation facilitates dissociation from the Golgi complex and is required for interaction with PLK1. Post-translationally, phosphorylated on threonine residues upon treatment with oleic acid. Phosphorylated on tyrosine residues by PTK2B. In terms of tissue distribution, detected at high levels in brain, and at lower levels in lung, kidney, spleen and liver (at protein level). Ubiquitous. Highly expressed in embryonic retina and the central nervous system.

Its subcellular location is the cytoplasm. It is found in the golgi apparatus. It localises to the golgi stack membrane. The protein resides in the endoplasmic reticulum membrane. The protein localises to the lipid droplet. Its subcellular location is the cleavage furrow. It is found in the midbody. The enzyme catalyses a 1,2-diacyl-sn-glycero-3-phospho-(1D-myo-inositol)(in) = a 1,2-diacyl-sn-glycero-3-phospho-(1D-myo-inositol)(out). Functionally, catalyzes the transfer of phosphatidylinositol (PI) between membranes. Binds PI. Also binds phosphatidylcholine (PC) and phosphatidic acid (PA) with the binding affinity order of PI &gt; PA &gt; PC. Regulates RHOA activity, and plays a role in cytoskeleton remodeling. Necessary for normal completion of cytokinesis. Plays a role in maintaining normal diacylglycerol levels in the Golgi apparatus. Necessary for maintaining the normal structure of the endoplasmic reticulum and the Golgi apparatus. Required for protein export from the endoplasmic reticulum and the Golgi. Binds calcium ions. In Mus musculus (Mouse), this protein is Membrane-associated phosphatidylinositol transfer protein 1 (Pitpnm1).